A 147-amino-acid chain; its full sequence is D-aminoacyl-tRNA deacylase (147 aa).

Positions 137 to 138 match the Gly-cisPro motif, important for rejection of L-amino acids motif; sequence GP.

Belongs to the DTD family. In terms of assembly, homodimer.

The protein resides in the cytoplasm. The enzyme catalyses glycyl-tRNA(Ala) + H2O = tRNA(Ala) + glycine + H(+). It carries out the reaction a D-aminoacyl-tRNA + H2O = a tRNA + a D-alpha-amino acid + H(+). An aminoacyl-tRNA editing enzyme that deacylates mischarged D-aminoacyl-tRNAs. Also deacylates mischarged glycyl-tRNA(Ala), protecting cells against glycine mischarging by AlaRS. Acts via tRNA-based rather than protein-based catalysis; rejects L-amino acids rather than detecting D-amino acids in the active site. By recycling D-aminoacyl-tRNA to D-amino acids and free tRNA molecules, this enzyme counteracts the toxicity associated with the formation of D-aminoacyl-tRNA entities in vivo and helps enforce protein L-homochirality. The polypeptide is D-aminoacyl-tRNA deacylase (Bacillus velezensis (strain DSM 23117 / BGSC 10A6 / LMG 26770 / FZB42) (Bacillus amyloliquefaciens subsp. plantarum)).